A 192-amino-acid polypeptide reads, in one-letter code: Peptide deformylase (192 aa).

The Fe cation site is built by cysteine 108 and histidine 150. The active site involves glutamate 151. Residue histidine 154 coordinates Fe cation.

It belongs to the polypeptide deformylase family. Fe(2+) serves as cofactor.

The enzyme catalyses N-terminal N-formyl-L-methionyl-[peptide] + H2O = N-terminal L-methionyl-[peptide] + formate. Its function is as follows. Removes the formyl group from the N-terminal Met of newly synthesized proteins. Requires at least a dipeptide for an efficient rate of reaction. N-terminal L-methionine is a prerequisite for activity but the enzyme has broad specificity at other positions. This chain is Peptide deformylase, found in Opitutus terrae (strain DSM 11246 / JCM 15787 / PB90-1).